A 583-amino-acid chain; its full sequence is Probable cysteine--tRNA ligase, mitochondrial (583 aa).

A Zn(2+)-binding site is contributed by Cys82. Gly83 contributes to the L-cysteine binding site. The 'HIGH' region signature appears at 84-94 (PTVYSSSHIGH). An L-cysteine-binding site is contributed by Thr123. A 'KIIK' region motif is present at residues 128–131 (KIIN). Zn(2+)-binding residues include Cys271, His296, and Glu300. Position 296 (His296) interacts with L-cysteine. A 'KMSKS' region motif is present at residues 337–341 (KMSKS). Lys340 contacts ATP.

Belongs to the class-I aminoacyl-tRNA synthetase family. The cofactor is Zn(2+).

Its subcellular location is the mitochondrion. The catalysed reaction is tRNA(Cys) + L-cysteine + ATP = L-cysteinyl-tRNA(Cys) + AMP + diphosphate. Functionally, mitochondrial cysteine-specific aminoacyl-tRNA synthetase that catalyzes the ATP-dependent ligation of cysteine to tRNA(Cys). Its function is as follows. In addition to its role as an aminoacyl-tRNA synthetase, has also cysteine persulfide synthase activity. Produces reactive persulfide species such as cysteine persulfide (CysSSH) from substrate cysteine and mediate direct incorporation of CysSSH into proteins during translations, resulting in protein persulfides and polysulfides. CysSSHs behave as potent antioxidants and cellular protectants. In Dictyostelium discoideum (Social amoeba), this protein is Probable cysteine--tRNA ligase, mitochondrial (mcysS).